The sequence spans 1202 residues: Caskin-2 (1202 aa).

ANK repeat units lie at residues Asp48–Ile77, Asn81–Ala110, Asp114–Leu143, Ala147–Leu176, Asn188–Arg217, and Lys220–Ile249. Phosphotyrosine is present on Tyr253. Residues Ser281 to Lys347 form the SH3 domain. Residues Arg355–Asn460 are disordered. Ser358, Ser393, Ser396, Ser403, Ser406, and Ser409 each carry phosphoserine. Residues Ser415–Thr425 show a composition bias toward polar residues. At Ser471 the chain carries Phosphoserine. SAM domains are found at residues Lys489 to Ala552 and Tyr558 to Leu622. Disordered stretches follow at residues Leu676–Pro1104 and Gly1116–His1181. Position 725 is a phosphoserine (Ser725). Residues Asn731–Pro740 are compositionally biased toward basic and acidic residues. Pro residues predominate over residues Ser765 to Ala774. 4 positions are modified to phosphoserine: Ser858, Ser877, Ser878, and Ser892. Positions Pro913–Ala923 are enriched in pro residues. Over residues Pro940–Gly949 the composition is skewed to low complexity. Pro residues-rich tracts occupy residues Pro966–Pro978 and Pro1018–Ser1030. The span at Pro1031–Thr1051 shows a compositional bias: low complexity. 2 stretches are compositionally biased toward pro residues: residues Pro1052–Gly1068 and Gly1124–Pro1133. Positions Ser1135 to Thr1151 are enriched in polar residues. The span at Ala1161–Glu1172 shows a compositional bias: basic and acidic residues.

May not bind CASK.

Its subcellular location is the cytoplasm. This chain is Caskin-2 (CASKIN2), found in Homo sapiens (Human).